Reading from the N-terminus, the 277-residue chain is Orotidine 5'-phosphate decarboxylase (277 aa).

Residues Asp-40, 62–64, 93–102, Tyr-229, and Arg-247 contribute to the substrate site; these read KTH and DRKFIDIGNT. The active-site Proton donor is Lys-95.

This sequence belongs to the OMP decarboxylase family.

It carries out the reaction orotidine 5'-phosphate + H(+) = UMP + CO2. It functions in the pathway pyrimidine metabolism; UMP biosynthesis via de novo pathway; UMP from orotate: step 2/2. This chain is Orotidine 5'-phosphate decarboxylase (pyrG), found in Aspergillus awamori (Black koji mold).